The chain runs to 724 residues: Phosphoribosylformylglycinamidine synthase subunit PurL (724 aa).

Residue His-46 is part of the active site. Residues Tyr-49 and Lys-88 each contribute to the ATP site. Glu-90 serves as a coordination point for Mg(2+). Substrate is bound by residues 91-94 and Arg-113; that span reads SHNH. His-92 acts as the Proton acceptor in catalysis. Asp-114 is a binding site for Mg(2+). Gln-237 contacts substrate. A Mg(2+)-binding site is contributed by Asp-265. Position 309–311 (309–311) interacts with substrate; sequence ESQ. ATP-binding residues include Asp-489 and Gly-526. Asn-527 provides a ligand contact to Mg(2+). Ser-529 is a binding site for substrate.

The protein belongs to the FGAMS family. In terms of assembly, monomer. Part of the FGAM synthase complex composed of 1 PurL, 1 PurQ and 2 PurS subunits.

The protein localises to the cytoplasm. It catalyses the reaction N(2)-formyl-N(1)-(5-phospho-beta-D-ribosyl)glycinamide + L-glutamine + ATP + H2O = 2-formamido-N(1)-(5-O-phospho-beta-D-ribosyl)acetamidine + L-glutamate + ADP + phosphate + H(+). It participates in purine metabolism; IMP biosynthesis via de novo pathway; 5-amino-1-(5-phospho-D-ribosyl)imidazole from N(2)-formyl-N(1)-(5-phospho-D-ribosyl)glycinamide: step 1/2. In terms of biological role, part of the phosphoribosylformylglycinamidine synthase complex involved in the purines biosynthetic pathway. Catalyzes the ATP-dependent conversion of formylglycinamide ribonucleotide (FGAR) and glutamine to yield formylglycinamidine ribonucleotide (FGAM) and glutamate. The FGAM synthase complex is composed of three subunits. PurQ produces an ammonia molecule by converting glutamine to glutamate. PurL transfers the ammonia molecule to FGAR to form FGAM in an ATP-dependent manner. PurS interacts with PurQ and PurL and is thought to assist in the transfer of the ammonia molecule from PurQ to PurL. The protein is Phosphoribosylformylglycinamidine synthase subunit PurL of Granulibacter bethesdensis (strain ATCC BAA-1260 / CGDNIH1).